The sequence spans 100 residues: Large ribosomal subunit protein bL21 (100 aa).

The protein belongs to the bacterial ribosomal protein bL21 family. As to quaternary structure, part of the 50S ribosomal subunit. Contacts protein L20.

Functionally, this protein binds to 23S rRNA in the presence of protein L20. This is Large ribosomal subunit protein bL21 from Deinococcus deserti (strain DSM 17065 / CIP 109153 / LMG 22923 / VCD115).